A 288-amino-acid polypeptide reads, in one-letter code: Bifunctional protein FolD (288 aa).

NADP(+)-binding positions include 166–168 (GAS) and I232.

Belongs to the tetrahydrofolate dehydrogenase/cyclohydrolase family. In terms of assembly, homodimer.

It catalyses the reaction (6R)-5,10-methylene-5,6,7,8-tetrahydrofolate + NADP(+) = (6R)-5,10-methenyltetrahydrofolate + NADPH. It carries out the reaction (6R)-5,10-methenyltetrahydrofolate + H2O = (6R)-10-formyltetrahydrofolate + H(+). It functions in the pathway one-carbon metabolism; tetrahydrofolate interconversion. In terms of biological role, catalyzes the oxidation of 5,10-methylenetetrahydrofolate to 5,10-methenyltetrahydrofolate and then the hydrolysis of 5,10-methenyltetrahydrofolate to 10-formyltetrahydrofolate. This is Bifunctional protein FolD from Acidithiobacillus ferrooxidans (strain ATCC 23270 / DSM 14882 / CIP 104768 / NCIMB 8455) (Ferrobacillus ferrooxidans (strain ATCC 23270)).